Reading from the N-terminus, the 141-residue chain is Nucleoside diphosphate kinase (141 aa).

The ATP site is built by Lys11, Phe59, Arg87, Thr93, Arg104, and Asn114. The active-site Pros-phosphohistidine intermediate is His117.

Belongs to the NDK family. Homotetramer. Requires Mg(2+) as cofactor.

Its subcellular location is the cytoplasm. The enzyme catalyses a 2'-deoxyribonucleoside 5'-diphosphate + ATP = a 2'-deoxyribonucleoside 5'-triphosphate + ADP. It catalyses the reaction a ribonucleoside 5'-diphosphate + ATP = a ribonucleoside 5'-triphosphate + ADP. Functionally, major role in the synthesis of nucleoside triphosphates other than ATP. The ATP gamma phosphate is transferred to the NDP beta phosphate via a ping-pong mechanism, using a phosphorylated active-site intermediate. This Laribacter hongkongensis (strain HLHK9) protein is Nucleoside diphosphate kinase.